A 290-amino-acid polypeptide reads, in one-letter code: Thioredoxin-like protein 1 (290 aa).

One can recognise a Thioredoxin domain in the interval 24–104 (VDCYADWCGP…PQALKEKVAL (81 aa)). A disulfide bridge connects residues Cys-31 and Cys-34. A PITH domain is found at 118 to 290 (SSSAPVKGFA…SKGKLQKVEA (173 aa)).

It localises to the cytoplasm. The protein localises to the nucleus. In terms of biological role, has a role in cellular detoxification of alkyl hydroperoxide. The protein is Thioredoxin-like protein 1 (txl1) of Schizosaccharomyces pombe (strain 972 / ATCC 24843) (Fission yeast).